The primary structure comprises 1609 residues: Laminin subunit gamma-1 (1609 aa).

An N-terminal signal peptide occupies residues 1-33 (MRGSHRAAPALRPRGRLWPVLAVLAAAAAAGCA). Positions 46-285 (RPQRCMPEFV…AISDFAVGGR (240 aa)) constitute a Laminin N-terminal domain. N60 and N134 each carry an N-linked (GlcNAc...) asparagine glycan. 16 disulfide bridges follow: C286-C295, C288-C305, C307-C316, C319-C339, C342-C351, C344-C367, C370-C379, C382-C395, C398-C410, C400-C416, C418-C427, C430-C442, C445-C456, C447-C463, C465-C474, and C477-C492. Laminin EGF-like domains are found at residues 286–341 (CKCN…ECLP), 342–397 (CDCN…ACSS), 398–444 (CHCS…GCRP), and 445–494 (CSCD…GCTP). Residues 495–504 (CFCFGHSSVC) enclose the Laminin EGF-like 5; first part domain. The region spanning 514–689 (SISSTFQIDE…PGVPATWVES (176 aa)) is the Laminin IV type A domain. 2 N-linked (GlcNAc...) asparagine glycosylation sites follow: N576 and N650. In terms of domain architecture, Laminin EGF-like 5; second part spans 690–723 (CTCPVGYGGQFCEMCLSGYRRETPNLGPYSPCVL). 24 disulfide bridges follow: C724–C733, C726–C740, C742–C751, C754–C770, C773–C781, C775–C792, C795–C804, C807–C825, C828–C842, C830–C849, C852–C861, C864–C881, C884–C898, C886–C905, C907–C916, C919–C932, C935–C947, C937–C954, C956–C965, C968–C980, C983–C995, C985–C1001, C1003–C1012, and C1015–C1028. 6 consecutive Laminin EGF-like domains span residues 724 to 772 (CACN…DCQP), 773 to 827 (CPCP…LCRL), 828 to 883 (CQCS…KCKA), 884 to 934 (CNCN…GCER), 935 to 982 (CDCH…GCKP), and 983 to 1030 (CDCH…GCQE). N-linked (GlcNAc...) asparagine glycosylation is found at N1022 and N1107. Positions 1030–1609 (ECPACYRLVK…CFNTPSIEKP (580 aa)) are domain II and I. A coiled-coil region spans residues 1038–1609 (VKDKVADHRV…CFNTPSIEKP (572 aa)). A Phosphoserine; by FAM20C modification is found at S1149. Residues N1161, N1175, N1205, N1223, N1241, N1380, N1395, and N1439 are each glycosylated (N-linked (GlcNAc...) asparagine). At S1493 the chain carries Phosphoserine.

Laminin is a complex glycoprotein, consisting of three different polypeptide chains (alpha, beta, gamma), which are bound to each other by disulfide bonds into a cross-shaped molecule comprising one long and three short arms with globules at each end. Gamma-1 is a subunit of laminin-1 (laminin-111 or EHS laminin), laminin-2 (laminin-211 or merosin), laminin-3 (laminin-121 or S-laminin), laminin-4 (laminin-221 or S-merosin), laminin-6 (laminin-311 or K-laminin), laminin-7 (laminin-321 or KS-laminin), laminin-8 (laminin-411), laminin-9 (laminin-421), laminin-10 (laminin-511) and laminin-11 (laminin-521). Interacts with SVEP1. As to expression, found in the basement membranes (major component).

It localises to the secreted. It is found in the extracellular space. Its subcellular location is the extracellular matrix. The protein resides in the basement membrane. Binding to cells via a high affinity receptor, laminin is thought to mediate the attachment, migration and organization of cells into tissues during embryonic development by interacting with other extracellular matrix components. This Homo sapiens (Human) protein is Laminin subunit gamma-1.